A 668-amino-acid chain; its full sequence is MAASEVAGLGAGTPSPSESSALCASKSDESLPDGLSPKDSAQKQKNLSPPSVSSQMITKESNRNAHLEHPEQNPGSSVGDTSAAHEEVVGENLVATALCLSGNGSQSDLKDLTNPAGEEGDTSLRESLHPVTRSLKAGCHSKQLASGNCSEEKCPAASVLKEGSRDAGLDLLPVVPPANGVEGVRVDQDDDQDSSSLKLSQNIAVQTDFKTADSEVNTDQDIEKNLDKMMTERTLLKERYQEVLDKQRQVESQLQVQLKQLQQRREEEMKNHQEILKAIQDVTIKREETKKKIEKEKKEFLQKEQDLKAEIEKLCEKGRREVWEMELDRLKNQDGEINRNIMEETERAWKAEILSLESRKELLVLKLEEAEKEAELHLTYLKSTPPTLETVRSKQEWETRLNGVRIMKKNVRDQFNSHIQLVRNGAKLSSLPQIPTPTLPPPPSEADFMLQVFQPSPSLTPRMPFSIGQVTMPMVMPSADPRSLSFPILNPALSQSSQPSPPLPGSHGRNSPGLGSLVSPHGPHMPPAASIPPPPGLGGIKASSETPRPQPVDKLEKILEKLLTRFPQCNKAQMTNILQQIKTARTTMAGLTMEELIQLVAARLAEHERVASSTQAPPTCKLCLMCQKLVQPSELHPMACTHALHKECIKFWAQTNTNDTCPFCPTLK.

Disordered regions lie at residues 1 to 87 (MAAS…AHEE) and 103 to 125 (NGSQ…TSLR). At A2 the chain carries N-acetylalanine. Phosphoserine is present on residues S15, S40, S48, and S54. Residues 43-59 (KQKNLSPPSVSSQMITK) show a composition bias toward polar residues. Residues 60-71 (ESNRNAHLEHPE) are compositionally biased toward basic and acidic residues. Phosphoserine is present on S196. Residues 220–379 (QDIEKNLDKM…AEKEAELHLT (160 aa)) adopt a coiled-coil conformation. The interval 486–552 (FPILNPALSQ…SSETPRPQPV (67 aa)) is disordered. Residues S497, S511, and S516 each carry the phosphoserine modification. Pro residues predominate over residues 523 to 536 (PHMPPAASIPPPPG). An RING-type; atypical zinc finger spans residues 623–665 (CLMCQKLVQPSELHPMACTHALHKECIKFWAQTNTNDTCPFCP).

This chain is RING finger protein 214 (Rnf214), found in Mus musculus (Mouse).